A 201-amino-acid chain; its full sequence is Extracellular superoxide dismutase [Cu-Zn] (201 aa).

The N-terminal stretch at 1–42 (MINSFIVIFLSFLIFINYANLVCVEATHVYGRRSHSNGMHGN) is a signal peptide. H89, H91, and H106 together coordinate Cu cation. A disulfide bond links C100 and C192. Zn(2+) is bound by residues H106, H114, H123, and D126. H163 contributes to the Cu cation binding site.

Belongs to the Cu-Zn superoxide dismutase family. In terms of assembly, homodimer. Cu cation serves as cofactor. Requires Zn(2+) as cofactor.

The protein resides in the secreted. The protein localises to the extracellular space. It carries out the reaction 2 superoxide + 2 H(+) = H2O2 + O2. Destroys radicals which are normally produced within the cells and which are toxic to biological systems. May act in the parasite defense against phagocyte-generated reactive oxygen species. This Onchocerca volvulus protein is Extracellular superoxide dismutase [Cu-Zn] (sod-4).